A 28-amino-acid polypeptide reads, in one-letter code: Mu-theraphotoxin-Hsp1a (28 aa).

3 cysteine pairs are disulfide-bonded: cysteine 2–cysteine 16, cysteine 9–cysteine 21, and cysteine 15–cysteine 25. Position 28 is an asparagine amide (asparagine 28).

Belongs to the neurotoxin 30 (phrixotoxin) family. In terms of tissue distribution, expressed by the venom gland.

It is found in the secreted. Its function is as follows. Potent and selective inhibitor of Nav1.7/SCN9A sodium channels. Inhibits Nav1.7/SCN9A peak current (IC(50)=13 nM). In vivo, does not induce visible signs of toxicity when intravenously injected into mice. This chain is Mu-theraphotoxin-Hsp1a, found in Homoeomma sp. (Peruvian tarantula).